Here is a 227-residue protein sequence, read N- to C-terminus: Sensory transduction protein RegX3 (227 aa).

Residues 3 to 116 form the Response regulatory domain; it reads SVLIVEDEES…ELIARIRAVL (114 aa). Aspartate 52 bears the 4-aspartylphosphate mark. A DNA-binding region (ompR/PhoB-type) is located at residues 128-227; the sequence is DGVLESGPVR…VRGLGYKLEG (100 aa).

Post-translationally, phosphorylated by SenX3.

Member of the two-component regulatory system SenX3/RegX3. Specifically binds to the promoter region of the senX3-regX3 operon. This is Sensory transduction protein RegX3 from Mycobacterium bovis (strain ATCC BAA-935 / AF2122/97).